The primary structure comprises 228 residues: 2-C-methyl-D-erythritol 4-phosphate cytidylyltransferase (228 aa).

Belongs to the IspD/TarI cytidylyltransferase family. IspD subfamily.

The catalysed reaction is 2-C-methyl-D-erythritol 4-phosphate + CTP + H(+) = 4-CDP-2-C-methyl-D-erythritol + diphosphate. It functions in the pathway isoprenoid biosynthesis; isopentenyl diphosphate biosynthesis via DXP pathway; isopentenyl diphosphate from 1-deoxy-D-xylulose 5-phosphate: step 2/6. Catalyzes the formation of 4-diphosphocytidyl-2-C-methyl-D-erythritol from CTP and 2-C-methyl-D-erythritol 4-phosphate (MEP). This chain is 2-C-methyl-D-erythritol 4-phosphate cytidylyltransferase, found in Halalkalibacterium halodurans (strain ATCC BAA-125 / DSM 18197 / FERM 7344 / JCM 9153 / C-125) (Bacillus halodurans).